We begin with the raw amino-acid sequence, 65 residues long: Kassorin-M (65 aa).

Residues 1–22 form the signal peptide; sequence MLTLKKSMLLLFFLGMVSFSLA. Residues 23–51 constitute a propeptide that is removed on maturation; it reads DDKREDEAEEGEDKRADEGEEKRAAEKKR. Residues 24 to 45 form a disordered region; it reads DKREDEAEEGEDKRADEGEEKR. Residue L64 is modified to Leucine amide.

Belongs to the frog skin active peptide (FSAP) family. Brevinin subfamily. Expressed by the skin glands.

The protein resides in the secreted. In terms of biological role, induces contraction of smooth muscle in isolated guinea pig urinary bladder (EC50=4.66 nM). Has no antimicrobial activity against the Gram-positive bacterium S.aureus, the Gram-negative bacterium E.coli and the yeast C.albicans. Elicits histamine release from rat peritoneal mast cells. The sequence is that of Kassorin-M from Phlyctimantis maculatus (Red-legged running frog).